A 564-amino-acid chain; its full sequence is Nucleoprotein (564 aa).

The segment at 54-236 (LRKNKRGEED…VTKDESSINI (183 aa)) is binding site for the cap structure m7GTP. Mn(2+) contacts are provided by D380 and E382. Zn(2+) contacts are provided by E390, C497, H500, and C525. D529 provides a ligand contact to Mn(2+).

This sequence belongs to the arenaviridae nucleocapsid protein family. In terms of assembly, homomultimerizes to form the nucleocapsid. Binds to viral genomic RNA. Interacts with glycoprotein G2. Interacts with protein Z; this interaction probably directs the encapsidated genome to budding sites. Interacts with protein L; this interaction does not interfere with Z-L interaction. Interacts with host IKBKE (via Protein kinase domain); the interaction inhibits IKBKE kinase activity.

The protein localises to the virion. The protein resides in the host cytoplasm. Functionally, encapsidates the genome, protecting it from nucleases. The encapsidated genomic RNA is termed the nucleocapsid (NC). Serves as template for viral transcription and replication. The increased presence of protein N in host cell does not seem to trigger the switch from transcription to replication as observed in other negative strain RNA viruses. Through the interaction with host IKBKE, strongly inhibits the phosphorylation and nuclear translocation of host IRF3, a protein involved in interferon activation pathway, leading to the inhibition of interferon-beta and IRF3-dependent promoters activation. Also encodes a functional 3'-5' exoribonuclease that degrades preferentially dsRNA substrates and thereby participates in the suppression of interferon induction. In Calomys callosus (Large vesper mouse), this protein is Nucleoprotein.